The sequence spans 181 residues: Protein FAM237A (181 aa).

Positions 1-33 (MADPGNRGGIHRPLSFTCSLLIVGMCCVSPFFC) are cleaved as a signal peptide. Position 113 is a leucine amide (L113). Positions 114–181 (GRRQLVGEEE…GKVNLEIKRK (68 aa)) are cleaved as a propeptide — removed in the mature form.

Post-translationally, the active form requires C-terminal amidation and disulfide bond formation. Expressed in the pituitary, testis, and heart and at lower levels in the brain.

The protein localises to the secreted. May be capable of activating GPR83 via the GNAQ signaling pathway. This is Protein FAM237A from Homo sapiens (Human).